The primary structure comprises 216 residues: ATP phosphoribosyltransferase (216 aa).

Belongs to the ATP phosphoribosyltransferase family. Short subfamily. As to quaternary structure, heteromultimer composed of HisG and HisZ subunits.

It localises to the cytoplasm. The enzyme catalyses 1-(5-phospho-beta-D-ribosyl)-ATP + diphosphate = 5-phospho-alpha-D-ribose 1-diphosphate + ATP. Its pathway is amino-acid biosynthesis; L-histidine biosynthesis; L-histidine from 5-phospho-alpha-D-ribose 1-diphosphate: step 1/9. In terms of biological role, catalyzes the condensation of ATP and 5-phosphoribose 1-diphosphate to form N'-(5'-phosphoribosyl)-ATP (PR-ATP). Has a crucial role in the pathway because the rate of histidine biosynthesis seems to be controlled primarily by regulation of HisG enzymatic activity. The protein is ATP phosphoribosyltransferase of Acidovorax ebreus (strain TPSY) (Diaphorobacter sp. (strain TPSY)).